A 298-amino-acid chain; its full sequence is Iron-regulated virulence regulatory protein IrgB (298 aa).

The 59-residue stretch at 1–59 (MQDLSAVKAFHALCQHKSLTAAAKALEQPKSTLSRRLAQLEEDLGQSLLMRQGNRLTLT) folds into the HTH lysR-type domain. Residues 19-38 (LTAAAKALEQPKSTLSRRLA) constitute a DNA-binding region (H-T-H motif).

This sequence belongs to the LysR transcriptional regulatory family.

Its function is as follows. Transcription activation of the irgA gene. In the presence of sufficient iron, transcription of both irgA and irgB is negatively regulated by a fur-like protein. In low iron conditions, negative regulation of transcription is removed, and production of irgB leads to positive transcriptional activation of irgA. In Vibrio cholerae serotype O1 (strain ATCC 39315 / El Tor Inaba N16961), this protein is Iron-regulated virulence regulatory protein IrgB (irgB).